A 304-amino-acid chain; its full sequence is UDP-3-O-acyl-N-acetylglucosamine deacetylase (304 aa).

Residues histidine 77, histidine 233, and aspartate 237 each contribute to the Zn(2+) site. The Proton donor role is filled by histidine 260.

This sequence belongs to the LpxC family. The cofactor is Zn(2+).

The catalysed reaction is a UDP-3-O-[(3R)-3-hydroxyacyl]-N-acetyl-alpha-D-glucosamine + H2O = a UDP-3-O-[(3R)-3-hydroxyacyl]-alpha-D-glucosamine + acetate. It participates in glycolipid biosynthesis; lipid IV(A) biosynthesis; lipid IV(A) from (3R)-3-hydroxytetradecanoyl-[acyl-carrier-protein] and UDP-N-acetyl-alpha-D-glucosamine: step 2/6. In terms of biological role, catalyzes the hydrolysis of UDP-3-O-myristoyl-N-acetylglucosamine to form UDP-3-O-myristoylglucosamine and acetate, the committed step in lipid A biosynthesis. In Lawsonia intracellularis (strain PHE/MN1-00), this protein is UDP-3-O-acyl-N-acetylglucosamine deacetylase.